Reading from the N-terminus, the 309-residue chain is Epidermal retinol dehydrogenase 2 (309 aa).

A helical membrane pass occupies residues 11–31 (LFIFLGKSLFSLLEAMIFALL). 44 to 68 (LITGAGSGLGRLLALQFARLGSVLV) provides a ligand contact to NADP(+). A substrate-binding site is contributed by Ser177. Tyr190 functions as the Proton acceptor in the catalytic mechanism. A helical transmembrane segment spans residues 270–290 (LLYFMMFLKSFLPLKTGLLIA).

The protein belongs to the short-chain dehydrogenases/reductases (SDR) family. Detected in adult lung. Detected at low levels in adult brain, heart, testis, placenta, cervix, pancreas, uterus, stomach, rectum, small intestine, colon, esophagus, thymus, skin, and skin keratinocyte. Expression is higher in psoriasis lesions relative to unaffected skin from psoriasis patients. Detected in fetal kidney, skin and lung.

Its subcellular location is the endoplasmic reticulum membrane. It catalyses the reaction all-trans-retinol--[retinol-binding protein] + NAD(+) = all-trans-retinal--[retinol-binding protein] + NADH + H(+). It functions in the pathway cofactor metabolism; retinol metabolism. Functionally, oxidoreductase with strong preference for NAD. Active in both the oxidative and reductive directions. Oxidizes all-trans-retinol in all-trans-retinaldehyde. No activity was detected with 11-cis-retinol or 11-cis-retinaldehyde as substrates with either NAD(+)/NADH or NADP(+)/NADPH. In Homo sapiens (Human), this protein is Epidermal retinol dehydrogenase 2.